The sequence spans 196 residues: Carnitine operon protein CaiE (196 aa).

Residues 173-196 are disordered; that stretch reads TQPLRQMEENRPRLQGTTDVTPKR. A compositionally biased stretch (polar residues) spans 187 to 196; sequence QGTTDVTPKR.

This sequence belongs to the transferase hexapeptide repeat family.

Its pathway is amine and polyamine metabolism; carnitine metabolism. Functionally, overproduction of CaiE stimulates the activity of CaiB and CaiD. In Escherichia coli O139:H28 (strain E24377A / ETEC), this protein is Carnitine operon protein CaiE.